Here is a 719-residue protein sequence, read N- to C-terminus: MALCAYAFPGILNRTVAVASDASKPTPLFSEWIHGTDLQFQFHQKLTQVKKRSRTVQASLSESGEYYTQRPPTPIVDTINYPIHMKNLSLKELKQLADELRSDTIFNVSKTGGHLGSSLGVVELTVALHYVFNAPQDRILWDVGHQSYPHKILTGRREKMSTLRQTNGLAGFTKRSESEYDCFGTGHSSTTISAGLGMAVGRDLKGRNNNVIAVIGDGAMTAGQAYEAMNNAGYLDSDMIVILNDNRQVSLPTATLDGPVPPVGALSSALSRLQSNRPLRELREVAKGVTKQIGGPMHELAAKVDEYARGMISGSGSTLFEELGLYYIGPVDGHNIDDLISILKEVRSTKTTGPVLIHVVTEKGRGYPYAERAADKYHGVAKFDPATGKQFKGSAKTQSYTTYFAEALIAEAEADKDIVAIHAAMGGGTGMNLFLRRFPTRCFDVGIAEQHAVTFAAGLACEGLKPFCAIYSSFMQRAYDQVVHDVDLQKLPVRFAMDRAGLVGADGPTHCGAFDVTFMACLPNMVVMAPSDEAELFHIVATAAAIDDRPSCFRYPRGNGIGVELPAGNKGIPLEVGKGRILVEGERVALLGYGSAVQNCLAAASVLESRGLQVTVADARFCKPLDRALIRSLAKSHEVLVTVEKGSIGGFGSHVVQFMALDGLLDGKLKWRPIVLPDRYIDHGSPADQLAEAGLTPSHIAATVFNILGQTREALEVMT.

The transit peptide at 1-57 (MALCAYAFPGILNRTVAVASDASKPTPLFSEWIHGTDLQFQFHQKLTQVKKRSRTVQ) directs the protein to the chloroplast. Residues histidine 145 and 186–188 (GHS) each bind thiamine diphosphate. A Mg(2+)-binding site is contributed by aspartate 217. Thiamine diphosphate is bound by residues 218-219 (GA), asparagine 246, tyrosine 367, and glutamate 449. Position 246 (asparagine 246) interacts with Mg(2+).

Belongs to the transketolase family. DXPS subfamily. Homodimer. Mg(2+) serves as cofactor. Requires thiamine diphosphate as cofactor.

It localises to the plastid. It is found in the chloroplast. It catalyses the reaction D-glyceraldehyde 3-phosphate + pyruvate + H(+) = 1-deoxy-D-xylulose 5-phosphate + CO2. The protein operates within metabolic intermediate biosynthesis; 1-deoxy-D-xylulose 5-phosphate biosynthesis; 1-deoxy-D-xylulose 5-phosphate from D-glyceraldehyde 3-phosphate and pyruvate: step 1/1. In terms of biological role, catalyzes the acyloin condensation reaction between C atoms 2 and 3 of pyruvate and glyceraldehyde 3-phosphate to yield 1-deoxy-D-xylulose-5-phosphate (DXP). This chain is Probable 1-deoxy-D-xylulose-5-phosphate synthase, chloroplastic (TKT2), found in Capsicum annuum (Capsicum pepper).